The primary structure comprises 278 residues: Beta-lactamase-like protein str5 (278 aa).

The chain crosses the membrane as a helical span at residues 20-37; sequence VFVLAALLSATFAFFTHT. Residue N112 is glycosylated (N-linked (GlcNAc...) asparagine).

This sequence belongs to the beta-lactamase family.

The protein localises to the membrane. The protein operates within mycotoxin biosynthesis. Its function is as follows. Beta-lactamase-like protein; part of the gene cluster that mediates the biosynthesis of strobilurin A, an antifungal polyketide that contains a key beta-methoxyacrylate toxophore that targets the complex III of the mitochondrial electron transport chain. Strobilurin biosynthesis begins with construction of benzoyl CoA by step-wise elimination of ammonia from phenylalanine by the phenylalanine ammonia-lyase str11, oxygenation by str8 and retro-Claisen reaction to form benzoic acid, which is activated to its CoA thiolester benzoyl CoA by the dedicated CoA ligase str10. Benzoyl CoA forms the starter unit for the highly reducing polyketide synthase stpks1 that produces the polyketide prestrobilutin A. The FAD-dependent oxygenase str9 then catalyzes the key oxidative rearrangement responsible for the creation of the beta-methoxyacrylate toxophore. Str9 performs epoxidation of the 2,3 olefin of prestrobilutin A, followed by Meinwald rearrangement to furnish the aldehyde intermediate. Rapid enolization of the aldehyde intermediate would give the beta-methoxyacrylate skeleton and methylations catalyzed by str2 and str3 complete the synthesis and lead to the production of strobilurin A. The short-chain dehydrogenase stl2 and the dehydrogenase str4 play a role in the shunt pathway leading to the production of bolineol. The cluster encodes no obvious halogenase gene that could be involved in production of strobilurin B, nor any obvious dimethylallyl-transferase that could be involved in the production of strobilurin G. It is possible that unknown proteins encoded in, or near, the cluster (such as str1 or stl1) may form new classes of halogenases or dimethylally-transferases, or that the responsible genes are located elsewhere on the genome. Similarly, proteins encoded by str5/str6 hydrolases appear to have no chemical role in the biosynthesis of strobilurin A. Finally, no obvious self-resistance gene is found within the cluster. In Strobilurus tenacellus, this protein is Beta-lactamase-like protein str5.